Reading from the N-terminus, the 574-residue chain is NEDD4-binding protein 2-like 2 (574 aa).

Disordered regions lie at residues 82 to 110, 127 to 161, 182 to 204, and 542 to 574; these read HKEMPGDKVGGTESIGSQALQDGKPLAPA, YKPPEKKKCRERKNETATFNNTDSKRRQEEKQKFN, ENENEASQGSCKEPEPSQEQTLS, and TQKSTQTPLPLQGDQRWGGSLGSHSQVSITDDY. 2 stretches are compositionally biased toward basic and acidic residues: residues 129–141 and 149–161; these read PPEKKKCRERKNE and DSKRRQEEKQKFN. A coiled-coil region spans residues 162–196; sequence SKKLEIDTELSQFYKEIEELENENEASQGSCKEPE. Over residues 563–574 the composition is skewed to polar residues; sequence GSHSQVSITDDY.

This Rattus norvegicus (Rat) protein is NEDD4-binding protein 2-like 2 (N4bp2l2).